The sequence spans 176 residues: Oleosin Ara h 14.0103 (176 aa).

Position 2 is an N-acetylalanine; alternate (Ala2). A run of 3 helical transmembrane segments spans residues 50 to 70, 75 to 95, and 96 to 116; these read IIAVLVGVPTGGTLLLLSGLS, IIGLAIATPVFIFFSPVIVPA, and VVTIGLAVTGILTAGACGLTG. The interval 156–176 is disordered; that stretch reads KTKDAGQEIQTKAQDVKRSSS.

Belongs to the oleosin family. Expressed in seeds (at protein level).

It is found in the lipid droplet. The protein localises to the membrane. In terms of biological role, may have a structural role to stabilize the lipid body during desiccation of the seed by preventing coalescence of the oil. Probably interacts with both lipid and phospholipid moieties of lipid bodies. May also provide recognition signals for specific lipase anchorage in lipolysis during seedling growth. This chain is Oleosin Ara h 14.0103, found in Arachis hypogaea (Peanut).